A 259-amino-acid polypeptide reads, in one-letter code: MSKYKLIMLRHGEGAWNKENRFCSWVDQKLNSDGLQEARNCGKQLKALNFEFDLVFTSILNRSIHTAWLILEELGQEWVPVESSWRLNERHYGALISLNREQMALNHGEEQVRLWRRSYNVTPPPIEESHPYYHEIYNDRKYKVCDVPLDQLPRSESLKDVLERLLPYWNERIAPEVLRGKTVLISAQGNSCRALLKYLEGISDEEIINITLPTGVPILLELDENLRTVGPHQFLGDQEAIQAAIKKVDDQGKVKRADK.

Ser2 is modified (N-acetylserine). Substrate contacts are provided by residues 10 to 17, 23 to 24, Arg62, 89 to 92, Arg100, and 116 to 117; these read RHGEGAWN, CS, ERHY, and RR. His11 (tele-phosphohistidine intermediate) is an active-site residue. Glu89 acts as the Proton donor/acceptor in catalysis. A Phosphothreonine modification is found at Thr122. 189-190 contacts substrate; that stretch reads GN.

This sequence belongs to the phosphoglycerate mutase family. BPG-dependent PGAM subfamily. As to quaternary structure, homodimer.

It carries out the reaction (2R)-3-phospho-glyceroyl phosphate = (2R)-2,3-bisphosphoglycerate + H(+). It catalyses the reaction (2R)-2-phosphoglycerate = (2R)-3-phosphoglycerate. With respect to regulation, at alkaline pH BPGM favors the synthase reaction; however, at lower pH the phosphatase reaction is dominant. Inhibited by citrate. Functionally, plays a major role in regulating hemoglobin oxygen affinity by controlling the levels of its allosteric effector 2,3-bisphosphoglycerate (2,3-BPG). Also exhibits mutase (EC 5.4.2.11) activity. The sequence is that of Bisphosphoglycerate mutase (BPGM) from Bos taurus (Bovine).